The following is an 88-amino-acid chain: MSETNERNNRHVYQGRVVSDKMDKTITVVVDTYKNHPVYKKRIKYSKKYYAHDENNEAKIGDTVRIMETRPLSHAKRYRLTKIVKKSI.

Belongs to the universal ribosomal protein uS17 family. As to quaternary structure, part of the 30S ribosomal subunit.

One of the primary rRNA binding proteins, it binds specifically to the 5'-end of 16S ribosomal RNA. The protein is Small ribosomal subunit protein uS17 of Lactobacillus gasseri (strain ATCC 33323 / DSM 20243 / BCRC 14619 / CIP 102991 / JCM 1131 / KCTC 3163 / NCIMB 11718 / NCTC 13722 / AM63).